A 185-amino-acid polypeptide reads, in one-letter code: Elongation factor P (185 aa).

The protein belongs to the elongation factor P family.

The protein resides in the cytoplasm. Its pathway is protein biosynthesis; polypeptide chain elongation. In terms of biological role, involved in peptide bond synthesis. Stimulates efficient translation and peptide-bond synthesis on native or reconstituted 70S ribosomes in vitro. Probably functions indirectly by altering the affinity of the ribosome for aminoacyl-tRNA, thus increasing their reactivity as acceptors for peptidyl transferase. The polypeptide is Elongation factor P (Bordetella avium (strain 197N)).